The primary structure comprises 160 residues: MRIGLFAVGRLKSGPEKDLAARYFDRFAKAGPAVGLELTRVAEVAESRASNAETRKREEAAMLLKSLADGSILILLDERGKALDSEAFANLLGSYRDQGKRELTIAIGGADGLDPSLYDRADATLCLGKMTWPHQLVRTLIAEQLYRAVTILSGHPYHRV.

Residues L76, G108, and 127–132 each bind S-adenosyl-L-methionine; that span reads LGKMTW.

It belongs to the RNA methyltransferase RlmH family. In terms of assembly, homodimer.

Its subcellular location is the cytoplasm. The enzyme catalyses pseudouridine(1915) in 23S rRNA + S-adenosyl-L-methionine = N(3)-methylpseudouridine(1915) in 23S rRNA + S-adenosyl-L-homocysteine + H(+). Functionally, specifically methylates the pseudouridine at position 1915 (m3Psi1915) in 23S rRNA. This is Ribosomal RNA large subunit methyltransferase H from Rhizobium johnstonii (strain DSM 114642 / LMG 32736 / 3841) (Rhizobium leguminosarum bv. viciae).